The primary structure comprises 242 residues: DNA repair protein RecO (242 aa).

Belongs to the RecO family. Monomer.

Its function is as follows. Involved in DNA repair and RecF pathway recombination. The polypeptide is DNA repair protein RecO (Salmonella gallinarum (strain 287/91 / NCTC 13346)).